Reading from the N-terminus, the 503-residue chain is Maturase K (503 aa).

The protein belongs to the intron maturase 2 family. MatK subfamily.

It is found in the plastid. The protein localises to the chloroplast. Usually encoded in the trnK tRNA gene intron. Probably assists in splicing its own and other chloroplast group II introns. The protein is Maturase K of Callistemon polandii (Gold-tipped bottlebrush).